The chain runs to 118 residues: Ribosome-binding factor A (118 aa).

Belongs to the RbfA family. As to quaternary structure, monomer. Binds 30S ribosomal subunits, but not 50S ribosomal subunits or 70S ribosomes.

The protein localises to the cytoplasm. Its function is as follows. One of several proteins that assist in the late maturation steps of the functional core of the 30S ribosomal subunit. Associates with free 30S ribosomal subunits (but not with 30S subunits that are part of 70S ribosomes or polysomes). Required for efficient processing of 16S rRNA. May interact with the 5'-terminal helix region of 16S rRNA. The protein is Ribosome-binding factor A of Dehalococcoides mccartyi (strain ATCC BAA-2266 / KCTC 15142 / 195) (Dehalococcoides ethenogenes (strain 195)).